The following is an 88-amino-acid chain: uncharacterized protein (88 aa).

The segment at residues 30–49 is a DNA-binding region (H-T-H motif); the sequence is VPEVMHLCGLSRSTIYELIR.

The protein to E.coli prophage CP4-57 regulatory protein alpA.

This is an uncharacterized protein from Escherichia coli (Bacteriophage P4).